The chain runs to 449 residues: Phosphoglucosamine mutase (449 aa).

S100 (phosphoserine intermediate) is an active-site residue. Mg(2+)-binding residues include S100, D241, D243, and D245. S100 is modified (phosphoserine).

It belongs to the phosphohexose mutase family. Mg(2+) is required as a cofactor. Post-translationally, activated by phosphorylation.

It catalyses the reaction alpha-D-glucosamine 1-phosphate = D-glucosamine 6-phosphate. Functionally, catalyzes the conversion of glucosamine-6-phosphate to glucosamine-1-phosphate. The polypeptide is Phosphoglucosamine mutase (Clostridium botulinum (strain 657 / Type Ba4)).